We begin with the raw amino-acid sequence, 219 residues long: Ribose-5-phosphate isomerase A (219 aa).

Residues 28–31 (SGST), 81–84 (DGAD), and 94–97 (KGGG) each bind substrate. Residue E103 is the Proton acceptor of the active site. A substrate-binding site is contributed by K121.

The protein belongs to the ribose 5-phosphate isomerase family. In terms of assembly, homodimer.

The catalysed reaction is aldehydo-D-ribose 5-phosphate = D-ribulose 5-phosphate. The protein operates within carbohydrate degradation; pentose phosphate pathway; D-ribose 5-phosphate from D-ribulose 5-phosphate (non-oxidative stage): step 1/1. Functionally, catalyzes the reversible conversion of ribose-5-phosphate to ribulose 5-phosphate. The sequence is that of Ribose-5-phosphate isomerase A from Actinobacillus pleuropneumoniae serotype 3 (strain JL03).